Consider the following 108-residue polypeptide: Peptidyl-prolyl cis-trans isomerase FKBP1A (108 aa).

The 89-residue stretch at 20 to 108 (GQTCVVHYTG…IFDVELLKLE (89 aa)) folds into the PPIase FKBP-type domain. Lys53 is subject to N6-acetyllysine; alternate. Lys53 is subject to N6-succinyllysine; alternate.

This sequence belongs to the FKBP-type PPIase family. FKBP1 subfamily. Interacts with TGFBR1; prevents TGFBR1 phosphorylation by TGFBR2 and stabilizes it in the inactive conformation. Interacts with ACVR1B and SMAD7. Identified in a complex composed of RYR1, PDE4D, PKA, FKBP1A and protein phosphatase 1 (PP1). Interacts directly with RYR2 and RYR3. Interacts with GLMN; rapamycin and FK506 abolish the interaction with GLMN in a dose dependent manner. Interacts directly with RYR1.

The protein resides in the cytoplasm. It is found in the cytosol. Its subcellular location is the sarcoplasmic reticulum membrane. It carries out the reaction [protein]-peptidylproline (omega=180) = [protein]-peptidylproline (omega=0). Its activity is regulated as follows. Inhibited by both FK506 and rapamycin. Its function is as follows. Keeps in an inactive conformation TGFBR1, the TGF-beta type I serine/threonine kinase receptor, preventing TGF-beta receptor activation in absence of ligand. May modulate the RYR1 calcium channel activity. PPIases accelerate the folding of proteins. It catalyzes the cis-trans isomerization of proline imidic peptide bonds in oligopeptides. The polypeptide is Peptidyl-prolyl cis-trans isomerase FKBP1A (FKBP1A) (Bos taurus (Bovine)).